The primary structure comprises 301 residues: Ribosomal RNA small subunit methyltransferase H (301 aa).

Residues 31 to 33 (GGY), Asp-49, Phe-76, Asp-97, and Gln-104 contribute to the S-adenosyl-L-methionine site.

Belongs to the methyltransferase superfamily. RsmH family.

It is found in the cytoplasm. The catalysed reaction is cytidine(1402) in 16S rRNA + S-adenosyl-L-methionine = N(4)-methylcytidine(1402) in 16S rRNA + S-adenosyl-L-homocysteine + H(+). Its function is as follows. Specifically methylates the N4 position of cytidine in position 1402 (C1402) of 16S rRNA. This is Ribosomal RNA small subunit methyltransferase H from Ehrlichia ruminantium (strain Gardel).